The following is a 246-amino-acid chain: Probable septum site-determining protein MinC (246 aa).

Residues 116–140 (AAVSPPPPPPARAEPAPPAARPAPG) are disordered. Positions 119-136 (SPPPPPPARAEPAPPAAR) are enriched in pro residues.

It belongs to the MinC family. In terms of assembly, interacts with MinD and FtsZ.

Functionally, cell division inhibitor that blocks the formation of polar Z ring septums. Rapidly oscillates between the poles of the cell to destabilize FtsZ filaments that have formed before they mature into polar Z rings. Prevents FtsZ polymerization. This Xanthomonas oryzae pv. oryzae (strain MAFF 311018) protein is Probable septum site-determining protein MinC.